The following is a 447-amino-acid chain: ATP-dependent protease ATPase subunit HslU (447 aa).

ATP-binding positions include Ile17, 59 to 64 (GVGKTE), Asp256, Glu321, and Arg393.

The protein belongs to the ClpX chaperone family. HslU subfamily. In terms of assembly, a double ring-shaped homohexamer of HslV is capped on each side by a ring-shaped HslU homohexamer. The assembly of the HslU/HslV complex is dependent on binding of ATP.

Its subcellular location is the cytoplasm. Its function is as follows. ATPase subunit of a proteasome-like degradation complex; this subunit has chaperone activity. The binding of ATP and its subsequent hydrolysis by HslU are essential for unfolding of protein substrates subsequently hydrolyzed by HslV. HslU recognizes the N-terminal part of its protein substrates and unfolds these before they are guided to HslV for hydrolysis. The polypeptide is ATP-dependent protease ATPase subunit HslU (Pseudomonas entomophila (strain L48)).